The following is a 148-amino-acid chain: SsrA-binding protein (148 aa).

The tract at residues 123-148 (KLHDKRETEKKRDWEREKARIMRSAT) is disordered. Residues 126 to 142 (DKRETEKKRDWEREKAR) are compositionally biased toward basic and acidic residues.

The protein belongs to the SmpB family.

The protein resides in the cytoplasm. Its function is as follows. Required for rescue of stalled ribosomes mediated by trans-translation. Binds to transfer-messenger RNA (tmRNA), required for stable association of tmRNA with ribosomes. tmRNA and SmpB together mimic tRNA shape, replacing the anticodon stem-loop with SmpB. tmRNA is encoded by the ssrA gene; the 2 termini fold to resemble tRNA(Ala) and it encodes a 'tag peptide', a short internal open reading frame. During trans-translation Ala-aminoacylated tmRNA acts like a tRNA, entering the A-site of stalled ribosomes, displacing the stalled mRNA. The ribosome then switches to translate the ORF on the tmRNA; the nascent peptide is terminated with the 'tag peptide' encoded by the tmRNA and targeted for degradation. The ribosome is freed to recommence translation, which seems to be the essential function of trans-translation. This Burkholderia pseudomallei (strain 1710b) protein is SsrA-binding protein.